The chain runs to 384 residues: H-2 class I histocompatibility antigen, TLA(B) alpha chain (384 aa).

An N-terminal signal peptide occupies residues 1–26 (MRMGTPVPGTLLILLAASQGQTQTCP). Residues 27 to 116 (GSHSLRYFYT…MLDYYNLSQN (90 aa)) are alpha-1. Residues 27 to 314 (GSHSLRYFYT…TSMPNRTTVR (288 aa)) lie on the Extracellular side of the membrane. Asn-63, Asn-112, and Asn-116 each carry an N-linked (GlcNAc...) asparagine glycan. The interval 117–208 (GSHTIQVMYG…ENRKKTQECT (92 aa)) is alpha-2. Cystine bridges form between Cys-127-Cys-190 and Cys-229-Cys-285. Positions 209–300 (DPPKTHVTHH…GLPEPLTLRW (92 aa)) are alpha-3. The 89-residue stretch at 211–299 (PKTHVTHHPR…EGLPEPLTLR (89 aa)) folds into the Ig-like C1-type domain. Residues 301-314 (EPPQTSMPNRTTVR) are connecting peptide. N-linked (GlcNAc...) asparagine glycosylation occurs at Asn-309. The helical transmembrane segment at 315-334 (ALLGAMIILGFMSGSVMMWM) threads the bilayer. Over 335–384 (RKNNGGNGDDNTAAYQNEREHLSLDPRAESEALGVEAGMKDLPSAPPLVS) the chain is Cytoplasmic. Basic and acidic residues predominate over residues 354–364 (EHLSLDPRAES). Residues 354–384 (EHLSLDPRAESEALGVEAGMKDLPSAPPLVS) form a disordered region.

Belongs to the MHC class I family. Heterodimer of an alpha chain and a beta chain (beta-2-microglobulin). In terms of tissue distribution, TL antigens are only expressed on thymocytes, activated T-lymphocytes and on some thymic leukemias.

It is found in the membrane. In terms of biological role, involved in the presentation of foreign antigens to the immune system. This is H-2 class I histocompatibility antigen, TLA(B) alpha chain (H2-T3) from Mus musculus (Mouse).